Consider the following 249-residue polypeptide: Sulfate transporter CysZ (249 aa).

Helical transmembrane passes span 26–46, 71–91, 150–170, and 206–226; these read LFVL…IYFA, VIWP…FTML, LFIL…WLLF, and LGFG…ILMM.

This sequence belongs to the CysZ family.

Its subcellular location is the cell inner membrane. High affinity, high specificity proton-dependent sulfate transporter, which mediates sulfate uptake. Provides the sulfur source for the cysteine synthesis pathway. The sequence is that of Sulfate transporter CysZ from Pseudomonas fluorescens (strain ATCC BAA-477 / NRRL B-23932 / Pf-5).